The primary structure comprises 428 residues: GTPase Obg (428 aa).

The region spanning 1 to 158 (MFVDQVKIYV…RYVTLELKLL (158 aa)) is the Obg domain. One can recognise an OBG-type G domain in the interval 159 to 329 (ADVGLVGFPS…LLFAIADLLE (171 aa)). GTP is bound by residues 165–172 (GFPSVGKS), 190–194 (FTTIV), 212–215 (DLPG), 282–285 (NKMD), and 310–312 (SAV). The Mg(2+) site is built by serine 172 and threonine 192. The OCT domain maps to 350–428 (KLEKEEAPFH…LLNYEFEFVD (79 aa)).

Belongs to the TRAFAC class OBG-HflX-like GTPase superfamily. OBG GTPase family. Monomer. It depends on Mg(2+) as a cofactor.

The protein resides in the cytoplasm. In terms of biological role, an essential GTPase which binds GTP, GDP and possibly (p)ppGpp with moderate affinity, with high nucleotide exchange rates and a fairly low GTP hydrolysis rate. Plays a role in control of the cell cycle, stress response, ribosome biogenesis and in those bacteria that undergo differentiation, in morphogenesis control. In Anoxybacillus flavithermus (strain DSM 21510 / WK1), this protein is GTPase Obg.